A 471-amino-acid chain; its full sequence is N-succinylglutamate 5-semialdehyde dehydrogenase (471 aa).

An NAD(+)-binding site is contributed by 207–212; sequence GSAHAG. Residues glutamate 230 and cysteine 264 contribute to the active site.

It belongs to the aldehyde dehydrogenase family. AstD subfamily.

It carries out the reaction N-succinyl-L-glutamate 5-semialdehyde + NAD(+) + H2O = N-succinyl-L-glutamate + NADH + 2 H(+). It participates in amino-acid degradation; L-arginine degradation via AST pathway; L-glutamate and succinate from L-arginine: step 4/5. Catalyzes the NAD-dependent reduction of succinylglutamate semialdehyde into succinylglutamate. The protein is N-succinylglutamate 5-semialdehyde dehydrogenase of Novosphingobium aromaticivorans (strain ATCC 700278 / DSM 12444 / CCUG 56034 / CIP 105152 / NBRC 16084 / F199).